Reading from the N-terminus, the 483-residue chain is Replication factor C large subunit (483 aa).

Glycine 43–threonine 50 lines the ATP pocket. A compositionally biased stretch (basic and acidic residues) spans glutamate 417–isoleucine 442. The segment at glutamate 417–phenylalanine 483 is disordered. Polar residues predominate over residues serine 448 to proline 457.

It belongs to the activator 1 small subunits family. RfcL subfamily. As to quaternary structure, heteromultimer composed of small subunits (RfcS) and large subunits (RfcL).

Functionally, part of the RFC clamp loader complex which loads the PCNA sliding clamp onto DNA. The chain is Replication factor C large subunit from Methanospirillum hungatei JF-1 (strain ATCC 27890 / DSM 864 / NBRC 100397 / JF-1).